A 656-amino-acid polypeptide reads, in one-letter code: Probable serine/threonine-protein kinase sky1 (656 aa).

Residues 1–127 form a disordered region; the sequence is MSDIQQDSTS…KQGGYHPVRR (127 aa). The span at 16–48 shows a compositional bias: gly residues; it reads TSLGGTSLGGTSLGGTSLGGTSLGGTSLGGTSL. Composition is skewed to low complexity over residues 49 to 64 and 72 to 89; these read GGST…STNS and TSSN…NNNE. Residues 96–108 are compositionally biased toward polar residues; sequence AGSSNKSFMPLNN. The Protein kinase domain maps to 135–648; it reads YQVVDKLGWG…AKDCLNHTWL (514 aa). 141 to 149 serves as a coordination point for ATP; it reads LGWGHFSTV. The interval 157–185 is disordered; it reads TPITTSSSSSSTTTTTTSSSSNGNGNGNG. Residues 160–179 are compositionally biased toward low complexity; that stretch reads TTSSSSSSTTTTTTSSSSNG. Lysine 197 serves as a coordination point for ATP. The active-site Proton acceptor is aspartate 298. Residues 330 to 454 form a disordered region; it reads RTSSSNKQSQ…TTATATATTT (125 aa). The segment covering 332 to 355 has biased composition (low complexity); sequence SSSNKQSQQQQQPQQQQSQQNIND. Composition is skewed to basic and acidic residues over residues 383–401 and 413–440; these read SNRD…DDNK and ENTD…KEEP. Low complexity predominate over residues 441–454; that stretch reads TTTTTTATATATTT.

Belongs to the protein kinase superfamily. CMGC Ser/Thr protein kinase family.

The enzyme catalyses L-seryl-[protein] + ATP = O-phospho-L-seryl-[protein] + ADP + H(+). It catalyses the reaction L-threonyl-[protein] + ATP = O-phospho-L-threonyl-[protein] + ADP + H(+). In Dictyostelium discoideum (Social amoeba), this protein is Probable serine/threonine-protein kinase sky1 (sky1).